A 151-amino-acid chain; its full sequence is D-aminoacyl-tRNA deacylase (151 aa).

Positions 137–138 (GP) match the Gly-cisPro motif, important for rejection of L-amino acids motif.

This sequence belongs to the DTD family. In terms of assembly, homodimer.

It is found in the cytoplasm. The catalysed reaction is glycyl-tRNA(Ala) + H2O = tRNA(Ala) + glycine + H(+). It catalyses the reaction a D-aminoacyl-tRNA + H2O = a tRNA + a D-alpha-amino acid + H(+). In terms of biological role, an aminoacyl-tRNA editing enzyme that deacylates mischarged D-aminoacyl-tRNAs. Also deacylates mischarged glycyl-tRNA(Ala), protecting cells against glycine mischarging by AlaRS. Acts via tRNA-based rather than protein-based catalysis; rejects L-amino acids rather than detecting D-amino acids in the active site. By recycling D-aminoacyl-tRNA to D-amino acids and free tRNA molecules, this enzyme counteracts the toxicity associated with the formation of D-aminoacyl-tRNA entities in vivo and helps enforce protein L-homochirality. The polypeptide is D-aminoacyl-tRNA deacylase (Listeria monocytogenes serotype 4a (strain HCC23)).